Consider the following 284-residue polypeptide: Pantothenate synthetase (284 aa).

30-37 (MGNLHDGH) serves as a coordination point for ATP. Catalysis depends on H37, which acts as the Proton donor. Q61 contributes to the (R)-pantoate binding site. Q61 lines the beta-alanine pocket. 149-152 (GEKD) provides a ligand contact to ATP. (R)-pantoate is bound at residue Q155. Residues I178 and 186 to 189 (LSSR) contribute to the ATP site.

It belongs to the pantothenate synthetase family. Homodimer.

The protein resides in the cytoplasm. It catalyses the reaction (R)-pantoate + beta-alanine + ATP = (R)-pantothenate + AMP + diphosphate + H(+). It participates in cofactor biosynthesis; (R)-pantothenate biosynthesis; (R)-pantothenate from (R)-pantoate and beta-alanine: step 1/1. Catalyzes the condensation of pantoate with beta-alanine in an ATP-dependent reaction via a pantoyl-adenylate intermediate. The chain is Pantothenate synthetase from Salmonella paratyphi A (strain ATCC 9150 / SARB42).